The following is a 181-amino-acid chain: Translationally-controlled tumor protein homolog (181 aa).

The 181-residue stretch at methionine 1 to glutamine 181 folds into the TCTP domain.

It belongs to the TCTP family.

The protein resides in the cytoplasm. Its function is as follows. Involved in calcium binding and microtubule stabilization. This Brugia malayi (Filarial nematode worm) protein is Translationally-controlled tumor protein homolog.